A 222-amino-acid chain; its full sequence is MCPPRGLLLVTILVLLNHLDHLSLARNLPTPTPSPGMFQCLNHSQTLLRAISNTLQKARQTLEFYSCTSEEIDHEDITKDKTSTVEACLPLELTMNESCLASREISLITNGSCLASRKTSFMTTLCLSSIYEDLKMYQVEFKAMNAKLLMDPKRQIFLDQNMLTAIDELLQALNVNSVTVPQNSSLEEPDFYKTKIKLCILLHAFRIRAVTINRMMSYLNAS.

An N-terminal signal peptide occupies residues 1–25 (MCPPRGLLLVTILVLLNHLDHLSLA). Intrachain disulfides connect cysteine 40-cysteine 113, cysteine 67-cysteine 199, and cysteine 88-cysteine 126. N-linked (GlcNAc...) asparagine glycosylation is found at asparagine 42, asparagine 96, asparagine 110, and asparagine 183.

Belongs to the IL-6 superfamily. Heterodimer with IL12B; disulfide-linked. This heterodimer is known as interleukin IL-12. Heterodimer with EBI3/IL27B; not disulfide-linked. This heterodimer is known as interleukin IL-35. Interacts with NBR1; this interaction promotes IL-12 secretion.

It is found in the secreted. In terms of biological role, heterodimerizes with IL12B to form the IL-12 cytokine or with EBI3/IL27B to form the IL-35 cytokine. IL-12 is primarily produced by professional antigen-presenting cells (APCs) such as B-cells and dendritic cells (DCs) as well as macrophages and granulocytes and regulates T-cell and natural killer-cell responses, induces the production of interferon-gamma (IFN-gamma), favors the differentiation of T-helper 1 (Th1) cells and is an important link between innate resistance and adaptive immunity. Mechanistically, exerts its biological effects through a receptor composed of IL12R1 and IL12R2 subunits. Binding to the receptor results in the rapid tyrosine phosphorylation of a number of cellular substrates including the JAK family kinases TYK2 and JAK2. In turn, recruited STAT4 gets phosphorylated and translocates to the nucleus where it regulates cytokine/growth factor responsive genes. As part of IL-35, plays essential roles in maintaining the immune homeostasis of the liver microenvironment and also functions as an immune-suppressive cytokine. Mediates biological events through unconventional receptors composed of IL12RB2 and gp130/IL6ST heterodimers or homodimers. Signaling requires the transcription factors STAT1 and STAT4, which form a unique heterodimer that binds to distinct DNA sites. The sequence is that of Interleukin-12 subunit alpha (IL12A) from Felis catus (Cat).